A 341-amino-acid chain; its full sequence is MIALDTIQYYGQIPGVNHYNGKKEFMENAVKIAQLSDAYGIVGSLSFFNHSVLDPWAVSSVIMRHTERHVPLIALQPYMYPPYTAAKLIQSFTYLYDRRIDLNMITGAVTGELQQTGGYIDHSSRYKKLHEYVQVLRLLLESDSAVSFKGDYYELNNLEFKPLLPDKRLFPRIFMSGSSEEGLETGLKAADFVVTHPGPLEHFKRHFSEKVQGSAVQSAIRIEIIARESAEQAWKIAHARYPGNRQGKIQLRMKTNSESSWQRMLAELALASETYDEVFWMGGYMNGGIYSPVLVGDYEQVAAYLNEYYKLGVKAVLLGSMYSEEDFIHFSRVKEGISNPV.

It belongs to the bacterial luciferase oxidoreductase family.

The enzyme catalyses 4-(gamma-L-glutamylamino)butanoyl-[BtrI ACP] + FMNH2 + O2 = 4-(gamma-L-glutamylamino)-(2S)-2-hydroxybutanoyl-[BtrI ACP] + FMN + H2O + H(+). Its pathway is antibiotic biosynthesis; butirosin biosynthesis. Its function is as follows. Monooxygenase component of a two-component system involved in the biosynthesis of the side chain of the aminoglycoside antibiotics in the biosynthetic pathway of butirosin. Together with BtrV, mediates hydroxylation of gamma-L-Glu-GABA-S-BtrI. Not able to hydroxylate free substrates, activation by the acyl-carrier protein is mandatory. Octanoyl-S-[BtrI acyl-carrier protein] is also accepted as substrate. This Niallia circulans (Bacillus circulans) protein is 4-(gamma-L-glutamylamino)butanoyl-[BtrI acyl-carrier protein] monooxygenase BtrO (btrO).